The primary structure comprises 415 residues: Multidrug resistance protein MdtA (415 aa).

Residues 1-21 (MKGSYKSRWVIVIVVVIAAIA) form the signal peptide. A compositionally biased stretch (polar residues) spans 34 to 47 (SAAPGATKQAQQSP). 2 disordered regions span residues 34 to 60 (SAAP…GPLA) and 392 to 415 (EAQS…GARS). A compositionally biased stretch (basic and acidic residues) spans 399 to 415 (PEEKATSREYAKKGARS).

This sequence belongs to the membrane fusion protein (MFP) (TC 8.A.1) family. As to quaternary structure, part of a tripartite efflux system composed of MdtA, MdtB and MdtC.

Its subcellular location is the cell inner membrane. Functionally, the MdtABC tripartite complex confers resistance against novobiocin and deoxycholate. This is Multidrug resistance protein MdtA from Escherichia fergusonii (strain ATCC 35469 / DSM 13698 / CCUG 18766 / IAM 14443 / JCM 21226 / LMG 7866 / NBRC 102419 / NCTC 12128 / CDC 0568-73).